The chain runs to 128 residues: uncharacterized protein (128 aa).

Basic and acidic residues predominate over residues 1–11; that stretch reads MDNKKKEENPS. Residues 1–40 form a disordered region; that stretch reads MDNKKKEENPSKSDTSISLPPSSTGEALQNYTESEWNASD. Residues 12 to 37 show a composition bias toward polar residues; it reads KSDTSISLPPSSTGEALQNYTESEWN.

This is an uncharacterized protein from Caenorhabditis elegans.